Here is a 96-residue protein sequence, read N- to C-terminus: MSRISIEEVKHVAHLARLAITDEEAEMFTEQLDSIISFAEELNEVDTDNVEPTTHVLKMKNVMREDEAGKGLPVEDVMKNAPDHKDGYVRVPSILD.

It belongs to the GatC family. As to quaternary structure, heterotrimer of A, B and C subunits.

It carries out the reaction L-glutamyl-tRNA(Gln) + L-glutamine + ATP + H2O = L-glutaminyl-tRNA(Gln) + L-glutamate + ADP + phosphate + H(+). The enzyme catalyses L-aspartyl-tRNA(Asn) + L-glutamine + ATP + H2O = L-asparaginyl-tRNA(Asn) + L-glutamate + ADP + phosphate + 2 H(+). Its function is as follows. Allows the formation of correctly charged Asn-tRNA(Asn) or Gln-tRNA(Gln) through the transamidation of misacylated Asp-tRNA(Asn) or Glu-tRNA(Gln) in organisms which lack either or both of asparaginyl-tRNA or glutaminyl-tRNA synthetases. The reaction takes place in the presence of glutamine and ATP through an activated phospho-Asp-tRNA(Asn) or phospho-Glu-tRNA(Gln). The protein is Aspartyl/glutamyl-tRNA(Asn/Gln) amidotransferase subunit C of Bacillus velezensis (strain DSM 23117 / BGSC 10A6 / LMG 26770 / FZB42) (Bacillus amyloliquefaciens subsp. plantarum).